The primary structure comprises 968 residues: Glycine dehydrogenase (decarboxylating) (968 aa).

Residue Lys-717 is modified to N6-(pyridoxal phosphate)lysine.

It belongs to the GcvP family. The glycine cleavage system is composed of four proteins: P, T, L and H. Pyridoxal 5'-phosphate is required as a cofactor.

The catalysed reaction is N(6)-[(R)-lipoyl]-L-lysyl-[glycine-cleavage complex H protein] + glycine + H(+) = N(6)-[(R)-S(8)-aminomethyldihydrolipoyl]-L-lysyl-[glycine-cleavage complex H protein] + CO2. Its function is as follows. The glycine cleavage system catalyzes the degradation of glycine. The P protein binds the alpha-amino group of glycine through its pyridoxal phosphate cofactor; CO(2) is released and the remaining methylamine moiety is then transferred to the lipoamide cofactor of the H protein. This Tropheryma whipplei (strain TW08/27) (Whipple's bacillus) protein is Glycine dehydrogenase (decarboxylating).